The sequence spans 385 residues: MRLGVSLLGSTGSIGRQTLEVVAAHPDRFRVVALAARSQIDALQEQVRIFRPELVAIAQESLGISFPDTRVVSGPGGLVEAATYETADIVVIALSGNSGIEPTLAAAAAGKTIALANKESVVCAGPLLRDIQSRTGCQVRPVDSEHSALWQLLQLPHRPAEIARVILTASGGPFRDRPLEHLNQVTPDEALAHPTWRMGPKITIDSATLLNKGLELIEAHWLFDLPFERLDVVIHPQSIVHALLAFVDGTTVAHAAYPDMRLPIQYALFYPERVASTVPPLDLARIGPLEFFPPDTERFPALPLAREVGIAGSTYPTVLCAADEIAVEAFLAGQIRFTEIVPLIRSVLDRHQPASEPLTLEAILAADRWARSVARELVGRAIRHA.

The NADPH site is built by Thr11, Gly12, Ser13, Ile14, Gln39, and Asn117. Lys118 serves as a coordination point for 1-deoxy-D-xylulose 5-phosphate. NADPH is bound at residue Glu119. Asp143 contributes to the Mn(2+) binding site. The 1-deoxy-D-xylulose 5-phosphate site is built by Ser144, Glu145, Ser170, and His193. Glu145 contributes to the Mn(2+) binding site. Residue Gly199 coordinates NADPH. The 1-deoxy-D-xylulose 5-phosphate site is built by Ser206, Asn211, Lys212, and Glu215. Glu215 is a binding site for Mn(2+).

This sequence belongs to the DXR family. Mg(2+) is required as a cofactor. The cofactor is Mn(2+).

The enzyme catalyses 2-C-methyl-D-erythritol 4-phosphate + NADP(+) = 1-deoxy-D-xylulose 5-phosphate + NADPH + H(+). It participates in isoprenoid biosynthesis; isopentenyl diphosphate biosynthesis via DXP pathway; isopentenyl diphosphate from 1-deoxy-D-xylulose 5-phosphate: step 1/6. Catalyzes the NADPH-dependent rearrangement and reduction of 1-deoxy-D-xylulose-5-phosphate (DXP) to 2-C-methyl-D-erythritol 4-phosphate (MEP). The chain is 1-deoxy-D-xylulose 5-phosphate reductoisomerase from Thermomicrobium roseum (strain ATCC 27502 / DSM 5159 / P-2).